Consider the following 162-residue polypeptide: MEAIKDFFGSLLLTELFKGMRLTGKYFFKRKMTLRYPTEKTPASPRFRGLHALRRYPNGEERCIACKLCEAVCPALAITIESDQREDGTRRTTRYDIDLTKCIFCGFCEESCPVDSIVETHIHEYHGEKRGDLYFTKDMLLAVGDRYEADIAQRRAEDAPYR.

4Fe-4S ferredoxin-type domains lie at 53 to 83 (LRRY…IESD) and 93 to 122 (TRYD…ETHI). [4Fe-4S] cluster contacts are provided by cysteine 63, cysteine 66, cysteine 69, cysteine 73, cysteine 102, cysteine 105, cysteine 108, and cysteine 112.

The protein belongs to the complex I 23 kDa subunit family. NDH-1 is composed of 14 different subunits. Subunits NuoA, H, J, K, L, M, N constitute the membrane sector of the complex. The cofactor is [4Fe-4S] cluster.

It is found in the cell inner membrane. It carries out the reaction a quinone + NADH + 5 H(+)(in) = a quinol + NAD(+) + 4 H(+)(out). NDH-1 shuttles electrons from NADH, via FMN and iron-sulfur (Fe-S) centers, to quinones in the respiratory chain. The immediate electron acceptor for the enzyme in this species is believed to be ubiquinone. Couples the redox reaction to proton translocation (for every two electrons transferred, four hydrogen ions are translocated across the cytoplasmic membrane), and thus conserves the redox energy in a proton gradient. This chain is NADH-quinone oxidoreductase subunit I, found in Bordetella avium (strain 197N).